The following is a 226-amino-acid chain: 7-cyano-7-deazaguanine synthase (226 aa).

Position 10–20 (10–20 (FSGGQDSTTLA)) interacts with ATP. Residues Cys-190, Cys-205, Cys-208, and Cys-211 each contribute to the Zn(2+) site.

It belongs to the QueC family. Requires Zn(2+) as cofactor.

The enzyme catalyses 7-carboxy-7-deazaguanine + NH4(+) + ATP = 7-cyano-7-deazaguanine + ADP + phosphate + H2O + H(+). The protein operates within purine metabolism; 7-cyano-7-deazaguanine biosynthesis. In terms of biological role, catalyzes the ATP-dependent conversion of 7-carboxy-7-deazaguanine (CDG) to 7-cyano-7-deazaguanine (preQ(0)). The sequence is that of 7-cyano-7-deazaguanine synthase from Helicobacter pylori (strain ATCC 700392 / 26695) (Campylobacter pylori).